Consider the following 303-residue polypeptide: Coenzyme PQQ synthesis protein B (303 aa).

This sequence belongs to the PqqB family.

Its pathway is cofactor biosynthesis; pyrroloquinoline quinone biosynthesis. Its function is as follows. May be involved in the transport of PQQ or its precursor to the periplasm. This chain is Coenzyme PQQ synthesis protein B, found in Pseudomonas putida (strain GB-1).